The sequence spans 557 residues: Myo-inositol transporter 2 (557 aa).

Residues 1–76 are Cytoplasmic-facing; it reads MDFNNIPLAT…ENGEGFEAEK (76 aa). A disordered region spans residues 24–69; the sequence is EMTTRPSETKKKVPFSEDMREIPSLPNEEEANATDPQANEVADENG. Positions 30 to 44 are enriched in basic and acidic residues; the sequence is SETKKKVPFSEDMRE. The chain crosses the membrane as a helical span at residues 77-97; it reads ISSWIWVLSAVAGISGLLFGY. Topologically, residues 98 to 99 are extracellular; sequence DT. A helical transmembrane segment spans residues 100–120; that stretch reads GVISGALAVLGSDLGHVLSSG. The Cytoplasmic segment spans residues 121–123; sequence QKE. A helical membrane pass occupies residues 124-144; sequence LITSATSFAALISATTSGWLA. Residues 145 to 157 are Extracellular-facing; sequence DWVGRKRLLLCAD. The helical transmembrane segment at 158–178 threads the bilayer; sequence AIFVIGSVIMAASRNVAMMVV. The Cytoplasmic portion of the chain corresponds to 179 to 180; the sequence is GR. Residues 181–201 form a helical membrane-spanning segment; sequence FIVGYGIGLTSLIVPMYITEL. The Extracellular portion of the chain corresponds to 202 to 209; that stretch reads APARLRGR. The chain crosses the membrane as a helical span at residues 210-230; the sequence is LVIIYVVFITGGQLIAYSLNA. The Cytoplasmic segment spans residues 231-240; sequence AFEHVHQGWR. The helical transmembrane segment at 241–261 threads the bilayer; sequence IMFGIGAAPALGQLISLFWTP. The Extracellular segment spans residues 262 to 367; that stretch reads ESPRYLLRHN…IFQSVGFKNS (106 aa). Residues 368–388 traverse the membrane as a helical segment; sequence ISVSIVVGATNFVFTIVAFMF. The Cytoplasmic segment spans residues 389-396; it reads IDRIGRRR. Residues 397 to 417 form a helical membrane-spanning segment; the sequence is ILLCTSAVMIAGLALCAIAYH. Topologically, residues 418-432 are extracellular; the sequence is FLPADTTQNTNSGWQ. A helical transmembrane segment spans residues 433-453; that stretch reads YVVLASIIIFLASYASGIGNI. At 454–468 the chain is on the cytoplasmic side; that stretch reads PWQQAELFPMEVRAL. Residues 469-489 traverse the membrane as a helical segment; the sequence is GAGFSTAINWVGNLIISASFL. Residues 490–498 lie on the Extracellular side of the membrane; sequence TMMESITPT. Residues 499–519 traverse the membrane as a helical segment; that stretch reads GTFALFAGFCFVGLVTSYFTY. The Cytoplasmic segment spans residues 520-557; the sequence is PELAGMSIENIHKLLEKGFWQAVKESTKRVRKGRIDEA.

It belongs to the major facilitator superfamily. Sugar transporter (TC 2.A.1.1) family.

The protein localises to the membrane. It carries out the reaction myo-inositol(out) + H(+)(out) = myo-inositol(in) + H(+)(in). In terms of biological role, transporter for myo-inositol. This chain is Myo-inositol transporter 2 (itr2), found in Schizosaccharomyces pombe (strain 972 / ATCC 24843) (Fission yeast).